The chain runs to 581 residues: Major facilitator superfamily multidrug transporter NAG4 (581 aa).

Positions 1-14 are enriched in polar residues; it reads MSHATDSTLDNASV. Positions 1-43 are disordered; it reads MSHATDSTLDNASVDSEKVRDFGDDLQNHPVQPTRSILSKIRS. N-linked (GlcNAc...) asparagine glycosylation occurs at Asn11. A compositionally biased stretch (basic and acidic residues) spans 15–27; sequence DSEKVRDFGDDLQ. N-linked (GlcNAc...) asparagine glycosylation occurs at Asn125. Helical transmembrane passes span 132–152, 169–189, 199–219, 230–250, 261–281, 290–310, 365–385, 403–423, 447–467, 471–491, 510–530, and 544–564; these read WLYTLVLGAVCFVVALGSAIV, VIILASVTVFVIGFGVGPLVF, KPIYVVTLFIAVVFIVPCGAA, LIDGIAFSAPMTLIGGSLADI, AIFSAAPFLGPVCGPIFGGLL, WIYWTFLIVAGVFYAIFIAIV, IVFLMTIYMAICYGLLYMFFF, GVMFIPIGVGVIIATIAAPFF, LIPMMIACWFVPVGLFAFAWS, WVSWAGPCFSGLAAGFGFCCL, ALAAKTFVRSIWGACVPLFTI, and LMAFISLACCAIPYLFFFFGA.

Belongs to the major facilitator superfamily. DHA1 family. Polyamines/proton antiporter (TC 2.A.1.2.16) subfamily.

Its subcellular location is the cell membrane. MFS transporter involved in N-acetylglucosamine (GlcNAc) uptake. Confers resistance to cycloheximide, 4-nitroquinoline-N-oxide, and 1,10-phenanthroline, and contributes to virulence. This chain is Major facilitator superfamily multidrug transporter NAG4, found in Candida albicans (strain SC5314 / ATCC MYA-2876) (Yeast).